Here is a 1893-residue protein sequence, read N- to C-terminus: Protein TIC 214 (1893 aa).

6 helical membrane passes run 18 to 38 (IINS…FSIG), 63 to 83 (AITG…YAPL), 87 to 107 (LGRP…HFFW), 127 to 147 (LSIQ…HFIL), 175 to 195 (VGWL…LVWI), and 224 to 244 (IFSI…PSPI). Basic and acidic residues-rich tracts occupy residues 249–258 (MKETSETEER) and 268–287 (EIER…RSTE). A disordered region spans residues 249–317 (MKETSETEER…TEEIRVNGKE (69 aa)). The span at 298–309 (EKEDPDKIDETE) shows a compositional bias: acidic residues. The helical transmembrane segment at 1126–1146 (LHYFIKFFIERIYIDILLCLI) threads the bilayer.

It belongs to the TIC214 family. As to quaternary structure, part of the Tic complex.

The protein resides in the plastid. It is found in the chloroplast inner membrane. Its function is as follows. Involved in protein precursor import into chloroplasts. May be part of an intermediate translocation complex acting as a protein-conducting channel at the inner envelope. This is Protein TIC 214 from Vitis vinifera (Grape).